The primary structure comprises 76 residues: Omega-conotoxin-like TxO3 (76 aa).

An N-terminal signal peptide occupies residues 1 to 22 (MKLTCVVIVAVLFLTAWTFVTA). The propeptide occupies 23 to 52 (VPHSSNALENLYLKAHHEMNNPEASELNKR). 3 disulfide bridges follow: cysteine 53–cysteine 67, cysteine 60–cysteine 71, and cysteine 66–cysteine 75.

It belongs to the conotoxin O1 superfamily. Expressed by the venom duct.

It localises to the secreted. Its function is as follows. Omega-conotoxins act at presynaptic membranes, they bind and block voltage-gated calcium channels (Cav). In Conus textile (Cloth-of-gold cone), this protein is Omega-conotoxin-like TxO3 (TXO3).